Here is a 311-residue protein sequence, read N- to C-terminus: Malate dehydrogenase (311 aa).

Residues Gly-7–Gly-13 and Asp-34 each bind NAD(+). Substrate-binding residues include Arg-81 and Arg-87. NAD(+) is bound by residues Asn-94 and Ile-117–Asn-119. The substrate site is built by Asn-119 and Arg-153. The active-site Proton acceptor is the His-177. Met-227 contributes to the NAD(+) binding site.

This sequence belongs to the LDH/MDH superfamily. MDH type 1 family. As to quaternary structure, homodimer.

The enzyme catalyses (S)-malate + NAD(+) = oxaloacetate + NADH + H(+). Catalyzes the reversible oxidation of malate to oxaloacetate. This chain is Malate dehydrogenase, found in Haemophilus influenzae (strain PittEE).